The chain runs to 156 residues: Small ribosomal subunit protein uS7 (156 aa).

It belongs to the universal ribosomal protein uS7 family. In terms of assembly, part of the 30S ribosomal subunit. Contacts proteins S9 and S11.

Functionally, one of the primary rRNA binding proteins, it binds directly to 16S rRNA where it nucleates assembly of the head domain of the 30S subunit. Is located at the subunit interface close to the decoding center, probably blocks exit of the E-site tRNA. This chain is Small ribosomal subunit protein uS7, found in Brucella melitensis biotype 1 (strain ATCC 23456 / CCUG 17765 / NCTC 10094 / 16M).